The following is a 159-amino-acid chain: Ribosomal RNA large subunit methyltransferase H (159 aa).

S-adenosyl-L-methionine contacts are provided by residues Leu76, Gly108, and 127–132 (FSKMTF).

This sequence belongs to the RNA methyltransferase RlmH family. As to quaternary structure, homodimer.

It localises to the cytoplasm. It catalyses the reaction pseudouridine(1915) in 23S rRNA + S-adenosyl-L-methionine = N(3)-methylpseudouridine(1915) in 23S rRNA + S-adenosyl-L-homocysteine + H(+). In terms of biological role, specifically methylates the pseudouridine at position 1915 (m3Psi1915) in 23S rRNA. The chain is Ribosomal RNA large subunit methyltransferase H from Geobacillus thermodenitrificans (strain NG80-2).